Here is an 868-residue protein sequence, read N- to C-terminus: Thiol protease/hemagglutinin PrtT (868 aa).

A signal peptide spans 1 to 27 (MKRIFYTLGLLLLCLPMLQAGPVTRSK). Catalysis depends on residues C184 and H327.

This sequence belongs to the peptidase C10 family.

Appears to be specific for arginine-containing peptide bonds. Possesses hemagglutinin activity. The chain is Thiol protease/hemagglutinin PrtT (prtT) from Porphyromonas gingivalis (Bacteroides gingivalis).